The chain runs to 212 residues: Large ribosomal subunit protein uL3 (212 aa).

Residue glutamine 153 is modified to N5-methylglutamine.

This sequence belongs to the universal ribosomal protein uL3 family. Part of the 50S ribosomal subunit. Forms a cluster with proteins L14 and L19. Post-translationally, methylated by PrmB.

One of the primary rRNA binding proteins, it binds directly near the 3'-end of the 23S rRNA, where it nucleates assembly of the 50S subunit. This chain is Large ribosomal subunit protein uL3, found in Idiomarina loihiensis (strain ATCC BAA-735 / DSM 15497 / L2-TR).